The chain runs to 702 residues: MA3 DOMAIN-CONTAINING TRANSLATION REGULATORY FACTOR 1 (702 aa).

Positions 39 to 66 (LNIKSPTGGKGPVAGIPNRHVRRTHSGK) are disordered. Over residues 57 to 66 (RHVRRTHSGK) the composition is skewed to basic residues. Residues 122–243 (DYKKSVVSII…PPVFLVRSKK (122 aa)) enclose the MI 1 domain. Positions 273-280 (EKKWGGST) match the Nuclear localization signal 1 motif. MI domains are found at residues 286-407 (ETKK…TSDQ), 420-541 (QYKK…DIST), and 583-702 (DAKD…SATQ). The Nuclear localization signal 2 signature appears at 458–465 (LKRLITLA).

The protein belongs to the PDCD4 family. In terms of assembly, binds to EIF4A1, S6K1 and S6K2. The association with ribosomes is modulated by cellular energy status and TOR activity. Phosphorylation by S6 kinases (e.g. S6K1 and S6K2) is modulated by cellular energy status and TOR activity. As to expression, mostly expressed in vegetative tissues, such as leaves, roots and stems, and, to a lower extent, in reproductive tissues, such as flower buds and flowers.

It is found in the nucleus. The protein resides in the cytoplasm. The protein localises to the cytosol. Functionally, involved in target of rapamycin (TOR)-regulated translation control, especially under energy-deficient conditions. The protein is MA3 DOMAIN-CONTAINING TRANSLATION REGULATORY FACTOR 1 of Arabidopsis thaliana (Mouse-ear cress).